A 199-amino-acid polypeptide reads, in one-letter code: Holliday junction branch migration complex subunit RuvA (199 aa).

Residues 1-64 (MIALLTGKLA…EDAINLYGFR (64 aa)) form a domain I region. A domain II region spans residues 65 to 143 (TQQEKELFQL…KLGLAQPQAG (79 aa)). A flexible linker region spans residues 144–148 (GTTAP). The segment at 149-199 (AKQEIRDDVLSALINLGYKEAVVQKALAELKVTEDATVELVLKQALKILMK) is domain III.

It belongs to the RuvA family. In terms of assembly, homotetramer. Forms an RuvA(8)-RuvB(12)-Holliday junction (HJ) complex. HJ DNA is sandwiched between 2 RuvA tetramers; dsDNA enters through RuvA and exits via RuvB. An RuvB hexamer assembles on each DNA strand where it exits the tetramer. Each RuvB hexamer is contacted by two RuvA subunits (via domain III) on 2 adjacent RuvB subunits; this complex drives branch migration. In the full resolvosome a probable DNA-RuvA(4)-RuvB(12)-RuvC(2) complex forms which resolves the HJ.

It is found in the cytoplasm. In terms of biological role, the RuvA-RuvB-RuvC complex processes Holliday junction (HJ) DNA during genetic recombination and DNA repair, while the RuvA-RuvB complex plays an important role in the rescue of blocked DNA replication forks via replication fork reversal (RFR). RuvA specifically binds to HJ cruciform DNA, conferring on it an open structure. The RuvB hexamer acts as an ATP-dependent pump, pulling dsDNA into and through the RuvAB complex. HJ branch migration allows RuvC to scan DNA until it finds its consensus sequence, where it cleaves and resolves the cruciform DNA. This Citrifermentans bemidjiense (strain ATCC BAA-1014 / DSM 16622 / JCM 12645 / Bem) (Geobacter bemidjiensis) protein is Holliday junction branch migration complex subunit RuvA.